The chain runs to 316 residues: Ribosomal RNA small subunit methyltransferase H (316 aa).

S-adenosyl-L-methionine-binding positions include 35 to 37 (SGH), Asp-55, Phe-84, Asp-105, and Gln-112.

The protein belongs to the methyltransferase superfamily. RsmH family.

The protein resides in the cytoplasm. The enzyme catalyses cytidine(1402) in 16S rRNA + S-adenosyl-L-methionine = N(4)-methylcytidine(1402) in 16S rRNA + S-adenosyl-L-homocysteine + H(+). Functionally, specifically methylates the N4 position of cytidine in position 1402 (C1402) of 16S rRNA. The polypeptide is Ribosomal RNA small subunit methyltransferase H (Streptococcus pyogenes serotype M4 (strain MGAS10750)).